A 743-amino-acid chain; its full sequence is Homeobox-leucine zipper protein PROTODERMAL FACTOR 2 (743 aa).

The tract at residues 1-72 (MYHPNMFESH…KKRYHRHTQR (72 aa)) is disordered. Basic and acidic residues predominate over residues 30 to 39 (SREDDFETKS). Positions 60–71 (PNKKKRYHRHTQ) are enriched in basic residues. A DNA-binding region (homeobox) is located at residues 62–121 (KKKRYHRHTQRQIQELESFFKECPHPDDKQRKELSRDLNLEPLQVKFWFQNKRTQMKAQS). A coiled-coil region spans residues 110-192 (FQNKRTQMKA…DRISAIAAKY (83 aa)). Residues 244-476 (SETDKPIIVE…LERQCERLAS (233 aa)) form the START domain.

The protein belongs to the HD-ZIP homeobox family. Class IV subfamily. Interacts with GAI/RGA2, RGA/RGA1/GRS, RGL2/SCL19 and ATML1. Binds to AIL7/PLT7, ANT, BBM and AIL1. In terms of tissue distribution, specifically expressed in the layer 1 (L1) of shoot meristems.

The protein localises to the nucleus. Its function is as follows. Probable transcription factor that binds to the L1 box DNA sequence 5'-TAAATG[CT]A-3'. Plays a role in maintaining the identity of L1 cells, possibly by interacting with their L1 box or other target-gene promoters; binds to the LIP1 gene promoter and stimulates its expression upon imbibition. Acts as a positive regulator of gibberellins (GAs)-regulated epidermal gene expression (e.g. LIP1, LIP2, LTP1, FDH and PDF1). Functionally redundant to ATML1. Involved, together with HDG proteins (e.g. HDG1, HDG2, HDG5 and HDG12), in the regulation of flower organs development by promoting the expression of APETALA 3 (AP3) in the epidermis and internal cell layers of developing flowers. Seems to promote cell differentiation. The chain is Homeobox-leucine zipper protein PROTODERMAL FACTOR 2 from Arabidopsis thaliana (Mouse-ear cress).